Consider the following 359-residue polypeptide: MNIYDQLQAVEDRYEELGELLSDPDVVSDTKRFMELSREEANTRETVTAYREYKQVIQTISDAEEMIKDASGDPELEEMAKEELKESKAAKEEYEEKLKILLLPKDPNDDKNIILEIRGAAGGDEAALFAGDLLTMYQKYAETQGWRFEVMESSVNGVGGIKEVVAMVSGQSVYSKLKYESGAHRVQRVPVTESQGRVHTSTATVLVMPEVEEVEYDIDPKDLRIDIYHASGAGGQNVNKVATAVRMVHIPTGIKVEMQEERTQQKNRDKAMKIIRARVADHFAQIAQDEQDAERKSTVGTGDRSERIRTYNFPQNRVTDHRIGLTLQKLDTILSGKMDEVIDALVMYDQTKKLESLNN.

Q236 bears the N5-methylglutamine mark.

This sequence belongs to the prokaryotic/mitochondrial release factor family. Methylated by PrmC. Methylation increases the termination efficiency of RF1.

The protein resides in the cytoplasm. Functionally, peptide chain release factor 1 directs the termination of translation in response to the peptide chain termination codons UAG and UAA. The protein is Peptide chain release factor 1 of Streptococcus pyogenes serotype M3 (strain ATCC BAA-595 / MGAS315).